Here is a 105-residue protein sequence, read N- to C-terminus: Ig lambda chain C region (105 aa).

Residues 6-100 (PSVILFPPSS…EGHTVEKSLA (95 aa)) form the Ig-like domain. Cys-27 and Cys-86 form a disulfide bridge.

This chain is Ig lambda chain C region, found in Oryctolagus cuniculus (Rabbit).